Consider the following 528-residue polypeptide: Phosphoenolpyruvate carboxykinase (ATP) (528 aa).

Substrate contacts are provided by Arg-56, Tyr-192, and Lys-198. Residues Lys-198, His-217, and 233–241 contribute to the ATP site; that span reads GLSGTGKTT. Lys-198 and His-217 together coordinate Mn(2+). Mn(2+) is bound at residue Asp-254. Glu-282, Arg-319, and Thr-444 together coordinate ATP. Arg-319 provides a ligand contact to substrate.

This sequence belongs to the phosphoenolpyruvate carboxykinase (ATP) family. Mn(2+) is required as a cofactor.

It localises to the cytoplasm. The enzyme catalyses oxaloacetate + ATP = phosphoenolpyruvate + ADP + CO2. It functions in the pathway carbohydrate biosynthesis; gluconeogenesis. Functionally, involved in the gluconeogenesis. Catalyzes the conversion of oxaloacetate (OAA) to phosphoenolpyruvate (PEP) through direct phosphoryl transfer between the nucleoside triphosphate and OAA. This Geobacillus thermodenitrificans (strain NG80-2) protein is Phosphoenolpyruvate carboxykinase (ATP).